The sequence spans 266 residues: MNLPASIPVRTFISGCHILHRHHVLDAYGHLSVRNPERSDTFFMSRDLAPGLISSSVDLVEYFVHDASPVNPASPAGYIERFIHSEIYQKYPEVQSVVHSHASTVLPYTITGVNLRPCVHMSGFLGASVPNFDVAKFYKEDDKCDLLIRNKDLGAHLAECFSAPESDSESTRSVVLMRGHGFTAVGGSIPESVYRAIYTVENAKIQTVSMTLSAAAAKGDGPHSGIYFLPEHEIRGTKELTQRSVMRSWKLWVREVETGGLYTNLA.

The active-site Proton acceptor is the E80. Positions 80, 99, 101, and 180 each coordinate Zn(2+).

This sequence belongs to the aldolase class II family. Requires Zn(2+) as cofactor.

Its pathway is secondary metabolite biosynthesis. In terms of biological role, decarboxylase; part of the gene cluster that mediates the biosynthesis of the tropolone class of fungal maleic anhydrides. The pathway begins with the synthesis of 3-methylorcinaldehyde by the non-reducing polyketide synthase (PKS) tropA. 3-methylorcinaldehyde is the substrate for the FAD-dependent monooxygenase tropB to yield a dearomatized hydroxycyclohexadione. The 2-oxoglutarate-dependent dioxygenase tropC then performs the oxidative ring expansion to provide the first tropolone metabolite stipitaldehyde. Trop D converts stipitaldehyde into stipitacetal which is in turn converted to stipitalide by the short-chain dehydrogenase/reductase tropE. The next steps involve tropF, tropG, tropH, tropI and tropJ to form successive tropolone maleic anhydrides including stipitaldehydic, stipitatonic and stipitatic acids. The protein is Decarboxylase tropJ of Talaromyces stipitatus (strain ATCC 10500 / CBS 375.48 / QM 6759 / NRRL 1006) (Penicillium stipitatum).